A 419-amino-acid chain; its full sequence is UDP-N-acetylglucosamine 1-carboxyvinyltransferase (419 aa).

22-23 (KN) contacts phosphoenolpyruvate. Arginine 91 contributes to the UDP-N-acetyl-alpha-D-glucosamine binding site. Residue cysteine 115 is the Proton donor of the active site. Position 115 is a 2-(S-cysteinyl)pyruvic acid O-phosphothioketal (cysteine 115). UDP-N-acetyl-alpha-D-glucosamine-binding positions include 120–124 (RPVDL), 160–163 (KVSV), aspartate 305, and valine 327.

The protein belongs to the EPSP synthase family. MurA subfamily.

The protein localises to the cytoplasm. It carries out the reaction phosphoenolpyruvate + UDP-N-acetyl-alpha-D-glucosamine = UDP-N-acetyl-3-O-(1-carboxyvinyl)-alpha-D-glucosamine + phosphate. It functions in the pathway cell wall biogenesis; peptidoglycan biosynthesis. Functionally, cell wall formation. Adds enolpyruvyl to UDP-N-acetylglucosamine. The chain is UDP-N-acetylglucosamine 1-carboxyvinyltransferase from Shigella dysenteriae serotype 1 (strain Sd197).